Reading from the N-terminus, the 453-residue chain is Tubulin delta chain (453 aa).

143–149 (AGGTGSG) lines the GTP pocket.

This sequence belongs to the tubulin family. In terms of assembly, found in a complex with TEDC1, TEDC2, TUBE1 and TUBD1.

It is found in the nucleus. It localises to the cytoplasm. Its subcellular location is the cytoskeleton. The protein resides in the microtubule organizing center. The protein localises to the centrosome. It is found in the centriole. It localises to the cell projection. Its subcellular location is the cilium. Acts as a positive regulator of hedgehog signaling and regulates ciliary function. The protein is Tubulin delta chain (TUBD1) of Macaca fascicularis (Crab-eating macaque).